A 104-amino-acid chain; its full sequence is Large ribosomal subunit protein uL24 (104 aa).

Belongs to the universal ribosomal protein uL24 family. As to quaternary structure, part of the 50S ribosomal subunit.

In terms of biological role, one of two assembly initiator proteins, it binds directly to the 5'-end of the 23S rRNA, where it nucleates assembly of the 50S subunit. One of the proteins that surrounds the polypeptide exit tunnel on the outside of the subunit. The chain is Large ribosomal subunit protein uL24 from Pseudomonas fluorescens (strain ATCC BAA-477 / NRRL B-23932 / Pf-5).